The primary structure comprises 407 residues: Substance-P receptor (407 aa).

The Extracellular portion of the chain corresponds to 1–31 (MDNVLPGDSDLFPNISTNSSESNQFVQPAWQ). Residues asparagine 14 and asparagine 18 are each glycosylated (N-linked (GlcNAc...) asparagine). Residues 32-54 (IVLWAAAYTVIVVTSVVGNVVVM) traverse the membrane as a helical segment. Residues 55–64 (WIILAHKRMR) lie on the Cytoplasmic side of the membrane. Residues 65-86 (TVTNYFLVNLAFAEASMAAFNT) traverse the membrane as a helical segment. The Extracellular segment spans residues 87 to 106 (VVNFTYAVHNEWYYGLFYCK). Asparagine 89 carries an N-linked (GlcNAc...) asparagine glycan. A disulfide bridge connects residues cysteine 105 and cysteine 180. Residues 107-128 (FHNFFPIAAVFASIYSMTAVAF) traverse the membrane as a helical segment. The Cytoplasmic segment spans residues 129–148 (DRYMAIIHPLQPRLSATATK). Residues 149-169 (VVIFVIWVLALLLAFPQGYYS) form a helical membrane-spanning segment. Over 170-194 (TTETMPGRVVCMIEWPEHPNRTYEK) the chain is Extracellular. Asparagine 189 carries an N-linked (GlcNAc...) asparagine glycan. Residues 195 to 219 (AYHICVTVLIYFLPLLVIGYAYTVV) form a helical membrane-spanning segment. At 220–248 (GITLWASEIPGDSSDRYHEQVSAKRKVVK) the chain is on the cytoplasmic side. The helical transmembrane segment at 249-270 (MMIVVVCTFAICWLPFHVFFLL) threads the bilayer. Residues 271–283 (PYINPDLYVKKFI) are Extracellular-facing. A helical membrane pass occupies residues 284-308 (QQVYLAIMWLAMSSTMYNPIIYCCL). Topologically, residues 309–407 (NDRFRLGFKH…SSSFYSNMLA (99 aa)) are cytoplasmic. Cysteine 322 is lipidated: S-palmitoyl cysteine. A disordered region spans residues 365-407 (HEDEAEEGPKATPSSLDLTSNGSSRSNSKTMTESSSFYSNMLA). Over residues 376–407 (TPSSLDLTSNGSSRSNSKTMTESSSFYSNMLA) the composition is skewed to polar residues.

It belongs to the G-protein coupled receptor 1 family. Interacts with ARRB1.

It is found in the cell membrane. Its function is as follows. This is a receptor for the tachykinin neuropeptide substance P. It is probably associated with G proteins that activate a phosphatidylinositol-calcium second messenger system. The polypeptide is Substance-P receptor (TACR1) (Meriones unguiculatus (Mongolian jird)).